The following is a 211-amino-acid chain: tRNA (guanine-N(7)-)-methyltransferase (211 aa).

The S-adenosyl-L-methionine site is built by E37, D62, E89, and D112. D112 is a catalytic residue. 2 residues coordinate substrate: K116 and D148.

This sequence belongs to the class I-like SAM-binding methyltransferase superfamily. TrmB family.

It carries out the reaction guanosine(46) in tRNA + S-adenosyl-L-methionine = N(7)-methylguanosine(46) in tRNA + S-adenosyl-L-homocysteine. Its pathway is tRNA modification; N(7)-methylguanine-tRNA biosynthesis. Functionally, catalyzes the formation of N(7)-methylguanine at position 46 (m7G46) in tRNA. This is tRNA (guanine-N(7)-)-methyltransferase from Geobacter metallireducens (strain ATCC 53774 / DSM 7210 / GS-15).